The following is a 314-amino-acid chain: MTKKVVFLDRESLDATVREFNFPHEYKEYESTWTPEEIVERLQGAEIAMINKVPMRADTLKQLPDLKLIAVAATGTDVVDKAAAKAQGITVVNIRNYAFNTVPEHVVGLMFALRRAIVPYANSVRRGDWNKSKQFCYFDYPIYDIAGSTLGIIGYGALGKSIAKRAEALGMKVLAFDVFPQDGLVDLETILTQSDVITLHVPLTPDTKNMIGAEQLKKMKRSAILINTARGGLVDEAALLQALKDGTIGGAGFDVVAQEPPKDGNILCDADLPNLIVTPHVAWASKEAMQILADQLVDNVEAFVAGKPQNVVEA.

NAD(+)-binding positions include Thr74, 157-158 (AL), 228-230 (TAR), and Asp254. The active site involves Arg230. The active site involves Glu259. His280 (proton donor) is an active-site residue. Residue 280–283 (HVAW) participates in NAD(+) binding.

This sequence belongs to the D-isomer specific 2-hydroxyacid dehydrogenase family. In terms of assembly, homodimer.

It localises to the cytoplasm. It carries out the reaction (R)-glycerate + NAD(+) = 3-hydroxypyruvate + NADH + H(+). It functions in the pathway one-carbon metabolism; formaldehyde assimilation via serine pathway. Functionally, plays a central role in assimilation of carbon. It converts hydroxypyruvate to glycerate as a key step in the serine cycle, and may also play an important role in C2 reactions, by interconverting glyoxylate and glycolate. This is Glycerate dehydrogenase (hprA) from Methylorubrum extorquens (strain ATCC 14718 / DSM 1338 / JCM 2805 / NCIMB 9133 / AM1) (Methylobacterium extorquens).